Consider the following 207-residue polypeptide: Ribosomal RNA small subunit methyltransferase G (207 aa).

Residues glycine 76, glutamine 81, 127–128, and arginine 141 contribute to the S-adenosyl-L-methionine site; that span reads VE.

The protein belongs to the methyltransferase superfamily. RNA methyltransferase RsmG family.

The protein localises to the cytoplasm. The enzyme catalyses guanosine(527) in 16S rRNA + S-adenosyl-L-methionine = N(7)-methylguanosine(527) in 16S rRNA + S-adenosyl-L-homocysteine. In terms of biological role, specifically methylates the N7 position of guanine in position 527 of 16S rRNA. This is Ribosomal RNA small subunit methyltransferase G from Neisseria meningitidis serogroup B (strain ATCC BAA-335 / MC58).